The following is a 602-amino-acid chain: 3-hydroxy-3-methylglutaryl-coenzyme A reductase 2 (602 aa).

A run of 2 helical transmembrane segments spans residues 44–67 and 95–115; these read ASDA…FFSV and AIVS…IGFV. Residues 116 to 187 are linker; that stretch reads QTFVSRGNND…PLITSASSGE (72 aa). N124 is a glycosylation site (N-linked (GlcNAc...) asparagine). The catalytic stretch occupies residues 188-602; sequence DEEIIKSVVQ…STKDVTKASS (415 aa). E281 acts as the Charge relay system in catalysis. N345 carries an N-linked (GlcNAc...) asparagine glycan. The active-site Charge relay system is K413. Residue N458 is glycosylated (N-linked (GlcNAc...) asparagine). The active-site Charge relay system is D489. Catalysis depends on H587, which acts as the Proton donor. The N-linked (GlcNAc...) asparagine glycan is linked to N591.

The protein belongs to the HMG-CoA reductase family.

The protein resides in the endoplasmic reticulum membrane. It catalyses the reaction (R)-mevalonate + 2 NADP(+) + CoA = (3S)-3-hydroxy-3-methylglutaryl-CoA + 2 NADPH + 2 H(+). It participates in metabolic intermediate biosynthesis; (R)-mevalonate biosynthesis; (R)-mevalonate from acetyl-CoA: step 3/3. Its function is as follows. Catalyzes the synthesis of mevalonate. The specific precursor of all isoprenoid compounds present in plants. This is 3-hydroxy-3-methylglutaryl-coenzyme A reductase 2 (HMG2) from Solanum lycopersicum (Tomato).